Here is a 278-residue protein sequence, read N- to C-terminus: Large ribosomal subunit protein uL2 (278 aa).

Disordered stretches follow at residues 33–53 (LTEGKRKTGGRNNKGHVTSRG) and 221–278 (RGVA…KKKR). Residues 269–278 (IRSRHAKKKR) are compositionally biased toward basic residues.

This sequence belongs to the universal ribosomal protein uL2 family. As to quaternary structure, part of the 50S ribosomal subunit. Forms a bridge to the 30S subunit in the 70S ribosome.

Its function is as follows. One of the primary rRNA binding proteins. Required for association of the 30S and 50S subunits to form the 70S ribosome, for tRNA binding and peptide bond formation. It has been suggested to have peptidyltransferase activity; this is somewhat controversial. Makes several contacts with the 16S rRNA in the 70S ribosome. The chain is Large ribosomal subunit protein uL2 from Novosphingobium aromaticivorans (strain ATCC 700278 / DSM 12444 / CCUG 56034 / CIP 105152 / NBRC 16084 / F199).